A 394-amino-acid chain; its full sequence is Multidrug resistance protein D (394 aa).

Residues 1–8 (MKRQRNVN) are Cytoplasmic-facing. Residues 9-29 (LLLMLVLLVAVGQMAQTIYIP) form a helical membrane-spanning segment. At 30–46 (AIADMARDLNVREGAVQ) the chain is on the periplasmic side. Residues 47–67 (SVMGAYLLTYGVSQLFYGPIS) traverse the membrane as a helical segment. Over 68 to 73 (DRVGRR) the chain is Cytoplasmic. Residues 74–94 (PVILVGMSIFMLATLVAVTTS) traverse the membrane as a helical segment. A topological domain (periplasmic) is located at residue S95. A helical transmembrane segment spans residues 96–116 (LTVLIAASAMQGMGTGVGGVM). Over 117–134 (ARTLPRDLYERTQLRHAN) the chain is Cytoplasmic. Residues 135 to 155 (SLLNMGILVSPLLAPLIGGLL) form a helical membrane-spanning segment. The Periplasmic segment spans residues 156–162 (DTMWNWR). A helical transmembrane segment spans residues 163 to 183 (ACYLFLLVLCAGVTFSMARWM). Residues 184–212 (PETRPVDAPRTRLLTSYKTLFGNSGFNCY) lie on the Cytoplasmic side of the membrane. The chain crosses the membrane as a helical span at residues 213 to 233 (LLMLIGGLAGIAAFEACSGVL). Residues 234 to 242 (MGAVLGLSS) lie on the Periplasmic side of the membrane. Residues 243–263 (MTVSILFILPIPAAFFGAWFA) traverse the membrane as a helical segment. Residues 264–276 (GRPNKRFSTLMWQ) are Cytoplasmic-facing. The chain crosses the membrane as a helical span at residues 277–297 (SVICCLLAGLLMWIPDWFGVM). N298 is a topological domain (periplasmic). Residues 299 to 319 (VWTLLVPAALFFFGAGMLFPL) form a helical membrane-spanning segment. Residues 320–329 (ATSGAMEPFP) are Cytoplasmic-facing. The chain crosses the membrane as a helical span at residues 330–350 (FLAGTAGALVGGLQNIGSGVL). At 351 to 364 (ASLSAMLPQTGQGS) the chain is on the periplasmic side. The chain crosses the membrane as a helical span at residues 365–385 (LGLLMTLMGLLIVLCWLPLAT). Residues 386–394 (RMSHQGQPV) lie on the Cytoplasmic side of the membrane.

This sequence belongs to the major facilitator superfamily.

It localises to the cell inner membrane. Its function is as follows. Multidrug resistance pump that participates in a low energy shock adaptive response. In Escherichia coli (strain K12), this protein is Multidrug resistance protein D (emrD).